Reading from the N-terminus, the 292-residue chain is Phosphatidylglycerol--prolipoprotein diacylglyceryl transferase (292 aa).

Helical transmembrane passes span 18–38, 67–87, and 105–125; these read LFGV…GLLI, LLTW…VLFY, and GGMS…AFCL. R150 provides a ligand contact to a 1,2-diacyl-sn-glycero-3-phospho-(1'-sn-glycerol). 3 helical membrane-spanning segments follow: residues 193 to 213, 222 to 242, and 266 to 286; these read QIYE…LLVW, GSVS…VEFV, and GLTM…YLIL.

The protein belongs to the Lgt family.

The protein localises to the cell inner membrane. The enzyme catalyses L-cysteinyl-[prolipoprotein] + a 1,2-diacyl-sn-glycero-3-phospho-(1'-sn-glycerol) = an S-1,2-diacyl-sn-glyceryl-L-cysteinyl-[prolipoprotein] + sn-glycerol 1-phosphate + H(+). It functions in the pathway protein modification; lipoprotein biosynthesis (diacylglyceryl transfer). Catalyzes the transfer of the diacylglyceryl group from phosphatidylglycerol to the sulfhydryl group of the N-terminal cysteine of a prolipoprotein, the first step in the formation of mature lipoproteins. The chain is Phosphatidylglycerol--prolipoprotein diacylglyceryl transferase from Cereibacter sphaeroides (strain ATCC 17029 / ATH 2.4.9) (Rhodobacter sphaeroides).